Consider the following 277-residue polypeptide: Phosphate import ATP-binding protein PstB 1 (277 aa).

The 246-residue stretch at 27–272 (LRVRDLAVSY…PSHELTAAYI (246 aa)) folds into the ABC transporter domain. 59-66 (GPSGCGKT) serves as a coordination point for ATP.

It belongs to the ABC transporter superfamily. Phosphate importer (TC 3.A.1.7) family. In terms of assembly, the complex is composed of two ATP-binding proteins (PstB), two transmembrane proteins (PstC and PstA) and a solute-binding protein (PstS).

It is found in the cell inner membrane. The catalysed reaction is phosphate(out) + ATP + H2O = ADP + 2 phosphate(in) + H(+). In terms of biological role, part of the ABC transporter complex PstSACB involved in phosphate import. Responsible for energy coupling to the transport system. The protein is Phosphate import ATP-binding protein PstB 1 of Nitrosococcus oceani (strain ATCC 19707 / BCRC 17464 / JCM 30415 / NCIMB 11848 / C-107).